The primary structure comprises 1573 residues: Pentafunctional AROM polypeptide 1 (1573 aa).

Residues 1–380 (MAEPTKISIL…YEPKASVVSN (380 aa)) form a 3-dehydroquinate synthase region. Residues 44-46 (DTN), 81-84 (ENSK), 112-114 (GGV), and aspartate 117 each bind NAD(+). 7-phospho-2-dehydro-3-deoxy-D-arabino-heptonate is bound at residue arginine 128. Position 137-138 (137-138 (TT)) interacts with NAD(+). Residues aspartate 144 and lysine 150 each coordinate 7-phospho-2-dehydro-3-deoxy-D-arabino-heptonate. Lysine 159 contacts NAD(+). Asparagine 160 contributes to the 7-phospho-2-dehydro-3-deoxy-D-arabino-heptonate binding site. NAD(+) is bound by residues 177–180 (FIDT) and asparagine 188. Position 192 (glutamate 192) interacts with Zn(2+). 7-phospho-2-dehydro-3-deoxy-D-arabino-heptonate is bound by residues 192–195 (EVIK) and lysine 246. The active-site Proton acceptor; for 3-dehydroquinate synthase activity is the glutamate 256. 7-phospho-2-dehydro-3-deoxy-D-arabino-heptonate contacts are provided by residues 260–264 (RNLLN) and histidine 267. Histidine 267 provides a ligand contact to Zn(2+). Histidine 271 serves as the catalytic Proton acceptor; for 3-dehydroquinate synthase activity. 7-phospho-2-dehydro-3-deoxy-D-arabino-heptonate-binding residues include histidine 283 and lysine 352. Histidine 283 contacts Zn(2+). The segment at 393-838 (VIPGVPKDLN…WDALKQKFGV (446 aa)) is EPSP synthase. Catalysis depends on cysteine 820, which acts as the For EPSP synthase activity. The shikimate kinase stretch occupies residues 859–1051 (DASIVIIGMR…RRKRLSFFMS (193 aa)). Residue 866 to 873 (GMRGAGKT) coordinates ATP. The 3-dehydroquinase stretch occupies residues 1052 to 1273 (LTLTDLRDSG…AAPGQLSAAE (222 aa)). Residue histidine 1175 is the Proton acceptor; for 3-dehydroquinate dehydratase activity of the active site. Lysine 1203 functions as the Schiff-base intermediate with substrate; for 3-dehydroquinate dehydratase activity in the catalytic mechanism. The interval 1286–1573 (AKKFAIFGKP…NAVLGTDETK (288 aa)) is shikimate dehydrogenase.

In the N-terminal section; belongs to the sugar phosphate cyclases superfamily. Dehydroquinate synthase family. This sequence in the 2nd section; belongs to the EPSP synthase family. The protein in the 3rd section; belongs to the shikimate kinase family. It in the 4th section; belongs to the type-I 3-dehydroquinase family. In the C-terminal section; belongs to the shikimate dehydrogenase family. Homodimer. The cofactor is Zn(2+).

It is found in the cytoplasm. It carries out the reaction 7-phospho-2-dehydro-3-deoxy-D-arabino-heptonate = 3-dehydroquinate + phosphate. It catalyses the reaction 3-dehydroquinate = 3-dehydroshikimate + H2O. The catalysed reaction is shikimate + NADP(+) = 3-dehydroshikimate + NADPH + H(+). The enzyme catalyses shikimate + ATP = 3-phosphoshikimate + ADP + H(+). It carries out the reaction 3-phosphoshikimate + phosphoenolpyruvate = 5-O-(1-carboxyvinyl)-3-phosphoshikimate + phosphate. It functions in the pathway metabolic intermediate biosynthesis; chorismate biosynthesis; chorismate from D-erythrose 4-phosphate and phosphoenolpyruvate: step 2/7. The protein operates within metabolic intermediate biosynthesis; chorismate biosynthesis; chorismate from D-erythrose 4-phosphate and phosphoenolpyruvate: step 3/7. Its pathway is metabolic intermediate biosynthesis; chorismate biosynthesis; chorismate from D-erythrose 4-phosphate and phosphoenolpyruvate: step 4/7. It participates in metabolic intermediate biosynthesis; chorismate biosynthesis; chorismate from D-erythrose 4-phosphate and phosphoenolpyruvate: step 5/7. It functions in the pathway metabolic intermediate biosynthesis; chorismate biosynthesis; chorismate from D-erythrose 4-phosphate and phosphoenolpyruvate: step 6/7. Functionally, the AROM polypeptide catalyzes 5 consecutive enzymatic reactions in prechorismate polyaromatic amino acid biosynthesis. This is Pentafunctional AROM polypeptide 1 from Talaromyces marneffei (strain ATCC 18224 / CBS 334.59 / QM 7333) (Penicillium marneffei).